Consider the following 511-residue polypeptide: Small ribosomal subunit protein uS4m (511 aa).

The region spanning 202–272 is the S4 RNA-binding domain; that stretch reads KRLDVVLYRS…IKNNLFSNIN (71 aa).

It belongs to the universal ribosomal protein uS4 family.

It localises to the mitochondrion. This Prototheca wickerhamii protein is Small ribosomal subunit protein uS4m (RPS4).